The primary structure comprises 391 residues: Heme A synthase (391 aa).

8 helical membrane passes run 37 to 57 (IRLWLMALFLLVMAMIVVGGL), 121 to 141 (RQLGRVIGLVWAVGFLGFLAA), 152 to 172 (LLALGALGGLQGGIGWWMVAS), 186 to 206 (LATHLGLAFIILGLIAWQALL), 229 to 249 (TTVLIGVAFLQIVLGALVAGI), 298 to 318 (FLHRMAGYTLAALGLIFWIFG), 332 to 352 (LLAMALLAQILLGVGTVLSAA), and 354 to 374 (WQVAIAHQVGAVVIWVLILHA). His-300 provides a ligand contact to heme. Position 360 (His-360) interacts with heme.

Belongs to the COX15/CtaA family. Type 2 subfamily. As to quaternary structure, interacts with CtaB. It depends on heme b as a cofactor.

It localises to the cell membrane. It carries out the reaction Fe(II)-heme o + 2 A + H2O = Fe(II)-heme a + 2 AH2. It participates in porphyrin-containing compound metabolism; heme A biosynthesis; heme A from heme O: step 1/1. Catalyzes the conversion of heme O to heme A by two successive hydroxylations of the methyl group at C8. The first hydroxylation forms heme I, the second hydroxylation results in an unstable dihydroxymethyl group, which spontaneously dehydrates, resulting in the formyl group of heme A. The sequence is that of Heme A synthase from Cereibacter sphaeroides (strain ATCC 17023 / DSM 158 / JCM 6121 / CCUG 31486 / LMG 2827 / NBRC 12203 / NCIMB 8253 / ATH 2.4.1.) (Rhodobacter sphaeroides).